The sequence spans 373 residues: MAAVTLHLRAETKPLEARAALTPTTVKKLIAKGFKIYVEDSPQSTFNINEYRQAGAIIVPAGSWKTAPRDRIIIGLKEMPETDTFPLVHEHIQFAHCYKDQAGWQNVLMRFIKGHGTLYDLEFLENDQGRRVAAFGFYAGFAGAALGVRDWAFKQTHSDDEDLPAVSPYPNEKALVKDVTKDYKEALATGARKPTVLIIGALGRCGSGAIDLLHKVGIPDANILKWDIKETSRGGPFDEIPQADIFINCIYLSKPIAPFTNMEKLNNPNRRLRTVVDVSADTTNPHNPIPIYTVATVFNKPTVLVPTTAGPKLSVISIDHLPSLLPREASEFFSHDLLPSLELLPQRKTAPVWVRAKKLFDRHCARVKRSSRL.

A2 carries the post-translational modification N-acetylalanine; partial. L-saccharopine-binding residues include R18 and K77. K77 (proton acceptor) is an active-site residue. The active-site Proton donor is H96. Q101 serves as a coordination point for L-saccharopine. Position 130 (R130) interacts with NAD(+). L-saccharopine contacts are provided by R131 and F135. Residues 203-204 (GR), D227, T231, Y251, and V278 each bind NAD(+). A disulfide bridge links C205 with C249. L-saccharopine is bound at residue 279–281 (SAD). 318–321 (IDHL) lines the NAD(+) pocket. The short motif at 371 to 373 (SRL) is the Microbody targeting signal element.

Belongs to the AlaDH/PNT family. Monomer.

The protein localises to the peroxisome. The catalysed reaction is L-saccharopine + NAD(+) + H2O = L-lysine + 2-oxoglutarate + NADH + H(+). Its pathway is amino-acid biosynthesis; L-lysine biosynthesis via AAA pathway; L-lysine from L-alpha-aminoadipate (fungal route): step 3/3. With respect to regulation, inhibited by p-chloromercuribenzoate and iodoacetate by modification of the active site cysteine residue. Inhibited by diethyl pyrocarbonate by modification of histidine residues. Inhibited by pyridoxal 5'-phosphate by modification of an essential lysine residue. Its function is as follows. Catalyzes the NAD(+)-dependent cleavage of saccharopine to L-lysine and 2-oxoglutarate, the final step in the alpha-aminoadipate (AAA) pathway for lysine biosynthesis. This chain is Saccharopine dehydrogenase [NAD(+), L-lysine-forming], found in Saccharomyces cerevisiae (strain ATCC 204508 / S288c) (Baker's yeast).